Here is a 357-residue protein sequence, read N- to C-terminus: 3-dehydroquinate synthase (357 aa).

NAD(+)-binding positions include 104–108, 128–129, K141, and 168–171; these read GVVGD, TT, and FLET. 3 residues coordinate Zn(2+): E183, H243, and H260.

It belongs to the sugar phosphate cyclases superfamily. Dehydroquinate synthase family. The cofactor is Co(2+). It depends on Zn(2+) as a cofactor. Requires NAD(+) as cofactor.

Its subcellular location is the cytoplasm. The catalysed reaction is 7-phospho-2-dehydro-3-deoxy-D-arabino-heptonate = 3-dehydroquinate + phosphate. It participates in metabolic intermediate biosynthesis; chorismate biosynthesis; chorismate from D-erythrose 4-phosphate and phosphoenolpyruvate: step 2/7. Catalyzes the conversion of 3-deoxy-D-arabino-heptulosonate 7-phosphate (DAHP) to dehydroquinate (DHQ). The polypeptide is 3-dehydroquinate synthase (Streptococcus pyogenes serotype M5 (strain Manfredo)).